Reading from the N-terminus, the 240-residue chain is 5-oxoprolinase subunit B (240 aa).

194-201 (GWQLIGKT) contributes to the ATP binding site.

This sequence belongs to the PxpB family. In terms of assembly, forms a complex composed of PxpA, PxpB and PxpC. Interacts with PxpC (KipA). Interaction with PxpC prevents the inhibitory action of PxpB (KipI). Interacts with KinA. Two PxpB monomers bind via their C-domains at a conserved proline in the KinA dimerization and histidine-phosphotransfer (DHp) domain.

The catalysed reaction is 5-oxo-L-proline + ATP + 2 H2O = L-glutamate + ADP + phosphate + H(+). Catalyzes the cleavage of 5-oxoproline to form L-glutamate coupled to the hydrolysis of ATP to ADP and inorganic phosphate. In addition, is a potent inhibitor of the autophosphorylation reaction of kinase A (kinA) and its reverse reaction, but does not inhibit phosphate transfer to the Spo0F response regulator once kinase A is phosphorylated. Is an inhibitor of the catalytic domain of kinase A affecting the ATP/ADP reactions and not the phosphotransferase functions of this domain. The inhibition is non-competitive with respect to ATP. The chain is 5-oxoprolinase subunit B from Bacillus subtilis (strain 168).